The primary structure comprises 416 residues: uncharacterized protein (416 aa).

The interval 341-360 is disordered; that stretch reads EDREKGSQHTNNTHHHKRNL.

This is an uncharacterized protein from Human cytomegalovirus (strain AD169) (HHV-5).